Here is a 474-residue protein sequence, read N- to C-terminus: Glutamate--tRNA ligase 2 (474 aa).

Residues 16–26 carry the 'HIGH' region motif; sequence PSPTGFLHIGG. The 'KMSKS' region signature appears at 245-249; the sequence is KLSKR. Residue lysine 248 participates in ATP binding.

This sequence belongs to the class-I aminoacyl-tRNA synthetase family. Glutamate--tRNA ligase type 1 subfamily. As to quaternary structure, monomer.

The protein localises to the cytoplasm. The catalysed reaction is tRNA(Glu) + L-glutamate + ATP = L-glutamyl-tRNA(Glu) + AMP + diphosphate. In terms of biological role, catalyzes the attachment of glutamate to tRNA(Glu) in a two-step reaction: glutamate is first activated by ATP to form Glu-AMP and then transferred to the acceptor end of tRNA(Glu). The polypeptide is Glutamate--tRNA ligase 2 (Rhizorhabdus wittichii (strain DSM 6014 / CCUG 31198 / JCM 15750 / NBRC 105917 / EY 4224 / RW1) (Sphingomonas wittichii)).